The primary structure comprises 491 residues: uncharacterized protein (491 aa).

Residues 1–92 form the PE domain; it reads MSFVIASPEA…GGGSYASAEI (92 aa). Disordered regions lie at residues 114-156, 376-400, and 419-491; these read PLVG…AGGA, AGGSGGSGAPGSVSSGGVGGAGNPG, and AGQG…GPDG. Residues 128–145 are compositionally biased toward gly residues; that stretch reads GQPGGDGGILWGNGGNGG. The segment covering 432–480 has biased composition (gly residues); the sequence is GGPGGVGGHGGTAILFGDGGAGGAGAAGGPGTPDGAAGPGGSGGTGGLL.

This sequence belongs to the mycobacterial PE family. PGRS subfamily.

This is an uncharacterized protein from Mycobacterium bovis (strain ATCC BAA-935 / AF2122/97).